The following is a 524-amino-acid chain: Germ cell-less protein-like 1 (524 aa).

The tract at residues 1–37 is disordered; sequence MGALSSRVLRPAGRTEQPEPTPGAGGAARRSDAGEDA. The short motif at 47 to 53 is the Nuclear localization signal element; it reads GRKRKRS. The interval 63–83 is disordered; sequence DSETDDDEDEGDEQQRLLNTP. Residue S64 is modified to Phosphoserine. Residues 65 to 74 show a composition bias toward acidic residues; that stretch reads ETDDDEDEGD. The residue at position 66 (T66) is a Phosphothreonine. The Nuclear localization signal motif lies at 83–89; it reads PRRKKLK. A BTB domain is found at 106–176; sequence SDIKICALGE…LYRDDVLIKP (71 aa).

As to quaternary structure, interacts with TMPO-Beta, TSG101 and TFDP2. Interacts with EMD. Ubiquitously expressed at low levels throughout development and in adult tissues.

It is found in the nucleus matrix. Functionally, possible function in spermatogenesis. Enhances the degradation of MDM2 and increases the amount of p53 probably by modulating the nucleocytoplasmic transport. The sequence is that of Germ cell-less protein-like 1 (Gmcl1) from Mus musculus (Mouse).